The chain runs to 185 residues: ATP synthase subunit delta (185 aa).

This sequence belongs to the ATPase delta chain family. In terms of assembly, F-type ATPases have 2 components, F(1) - the catalytic core - and F(0) - the membrane proton channel. F(1) has five subunits: alpha(3), beta(3), gamma(1), delta(1), epsilon(1). CF(0) has four main subunits: a(1), b(1), b'(1) and c(10-14). The alpha and beta chains form an alternating ring which encloses part of the gamma chain. F(1) is attached to F(0) by a central stalk formed by the gamma and epsilon chains, while a peripheral stalk is formed by the delta, b and b' chains.

It localises to the cellular thylakoid membrane. Its function is as follows. F(1)F(0) ATP synthase produces ATP from ADP in the presence of a proton or sodium gradient. F-type ATPases consist of two structural domains, F(1) containing the extramembraneous catalytic core and F(0) containing the membrane proton channel, linked together by a central stalk and a peripheral stalk. During catalysis, ATP synthesis in the catalytic domain of F(1) is coupled via a rotary mechanism of the central stalk subunits to proton translocation. This protein is part of the stalk that links CF(0) to CF(1). It either transmits conformational changes from CF(0) to CF(1) or is implicated in proton conduction. This is ATP synthase subunit delta from Picosynechococcus sp. (strain ATCC 27264 / PCC 7002 / PR-6) (Agmenellum quadruplicatum).